Here is a 626-residue protein sequence, read N- to C-terminus: MPSATAAKAKKANANANLKSKVNKAPAVTEIDEQSGHSEDESDFGSELDVEDESAASDEEDEDEDEDEHDLEEGVSDEGEGVSDEEEGVSDEDEDEENQSAGSGSDSDSDSLDSDAPRKRRRTSPTIDDIVTQLEDEEEDDTPVAPVKPVFNNVPSRIKKKQAEAPKTEKTEEATPALPVPEPASTVSVPIDANTTFDALNVRPWLVQSLANMAIKRPTGIQKGCIPEILKGRDCIGGSRTGSGKTVAFAVPILQQWAANPSAIFGVILTPTRELALQIMEQVIALSQPHVLKAVLITGGADMRKQAIDLAKRPHLVIATPGRLADHIRTSGEDTICGLRRVKFIVLDEADRLLANSGHGSMLPDVEECFSVLPPPSERQTLLFTATMTPEVKALSERPPIPGRAPVFVCEVDTQRLAIPATLRQMHLQVPVTHREHYLHMFLLTPQNVDKSVIIFCNRTSTADFLHHLLRLLDHRVTSLHSKLPQSQRIDNLGRFRASAARILVATDVAARGLDIPEVKIVINYDIPRDPDDYIHRVGRTARAGRKGDAVTFVGQRDVDLVLAIEQRVGRQMEAWTEEGVNLETRVIRDALKVVGEKKREALLEIEEQKEVGGKRKRGKEKLRAM.

Positions 1–25 (MPSATAAKAKKANANANLKSKVNKA) are enriched in low complexity. The interval 1–183 (MPSATAAKAK…ATPALPVPEP (183 aa)) is disordered. A compositionally biased stretch (acidic residues) spans 40–98 (DESDFGSELDVEDESAASDEEDEDEDEDEHDLEEGVSDEGEGVSDEEEGVSDEDEDEEN). Basic and acidic residues predominate over residues 161 to 173 (KQAEAPKTEKTEE). Positions 195–223 (TTFDALNVRPWLVQSLANMAIKRPTGIQK) match the Q motif motif. One can recognise a Helicase ATP-binding domain in the interval 226 to 406 (IPEILKGRDC…ERPPIPGRAP (181 aa)). Residue 239-246 (SRTGSGKT) coordinates ATP. A DEAD box motif is present at residues 348-351 (DEAD). Positions 438–589 (YLHMFLLTPQ…GVNLETRVIR (152 aa)) constitute a Helicase C-terminal domain.

This sequence belongs to the DEAD box helicase family. DDX49/DBP8 subfamily.

It localises to the nucleus. It is found in the nucleolus. It catalyses the reaction ATP + H2O = ADP + phosphate + H(+). Its function is as follows. ATP-binding RNA helicase involved in 40S ribosomal subunit biogenesis and is required for the normal formation of 18S rRNAs through pre-rRNA processing at A0, A1 and A2 sites. Required for vegetative growth. This is ATP-dependent RNA helicase dbp-8 (dbp-8) from Neurospora crassa (strain ATCC 24698 / 74-OR23-1A / CBS 708.71 / DSM 1257 / FGSC 987).